Consider the following 241-residue polypeptide: Phosphoadenosine 5'-phosphosulfate reductase (241 aa).

The active-site Nucleophile; cysteine thiosulfonate intermediate is the cysteine 235.

Belongs to the PAPS reductase family. CysH subfamily.

It is found in the cytoplasm. It carries out the reaction [thioredoxin]-disulfide + sulfite + adenosine 3',5'-bisphosphate + 2 H(+) = [thioredoxin]-dithiol + 3'-phosphoadenylyl sulfate. It participates in sulfur metabolism; hydrogen sulfide biosynthesis; sulfite from sulfate: step 3/3. Catalyzes the formation of sulfite from phosphoadenosine 5'-phosphosulfate (PAPS) using thioredoxin as an electron donor. The protein is Phosphoadenosine 5'-phosphosulfate reductase of Xanthomonas oryzae pv. oryzae (strain MAFF 311018).